We begin with the raw amino-acid sequence, 350 residues long: ADP-ribosylhydrolase ARH3 (350 aa).

Mg(2+) is bound by residues E27, T57, D58, and D59. Residue D58 coordinates substrate. Substrate contacts are provided by residues 127–133 (KGSYGNG), H163, L216, and I252. Residues D295, D297, and T298 each coordinate Mg(2+).

The protein belongs to the ADP-ribosylglycohydrolase family. Monomer. Mg(2+) is required as a cofactor.

The protein resides in the nucleus. Its subcellular location is the cytoplasm. It localises to the chromosome. The protein localises to the mitochondrion matrix. It catalyses the reaction [(1''-&gt;2')-ADP-alpha-D-ribose](n) + H2O = [(1''-&gt;2')-ADP-alpha-D-ribose](n-1) + ADP-D-ribose. The enzyme catalyses 1''-O-acetyl-ADP-alpha-D-ribose + H2O = ADP-D-ribose + acetate + H(+). It carries out the reaction O-(ADP-D-ribosyl)-L-seryl-[protein] + H2O = ADP-D-ribose + L-seryl-[protein]. The catalysed reaction is alpha-NAD(+) + H2O = ADP-D-ribose + nicotinamide + H(+). The protein undergoes a dramatic conformational switch from closed to open states upon substrate-binding, which enables specific substrate recognition for the 1''-O-linkage. The glutamate flap (Glu-27) blocks substrate entrance to Mg(2+) in the unliganded closed state. In presence of substrate, Glu-27 is ejected from the active site: this closed-to-open transition significantly widens the substrate-binding channel and precisely positions the scissile 1''-O-linkage for cleavage while securing tightly 2'- and 3'-hydroxyls of ADP-ribose. Functionally, ADP-ribosylhydrolase that preferentially hydrolyzes the scissile alpha-O-linkage attached to the anomeric C1'' position of ADP-ribose and acts on different substrates, such as proteins ADP-ribosylated on serine and threonine, free poly(ADP-ribose) and O-acetyl-ADP-D-ribose. Specifically acts as a serine mono-ADP-ribosylhydrolase by mediating the removal of mono-ADP-ribose attached to serine residues on proteins, thereby playing a key role in DNA damage response. Serine ADP-ribosylation of proteins constitutes the primary form of ADP-ribosylation of proteins in response to DNA damage. Does not hydrolyze ADP-ribosyl-arginine, -cysteine, -diphthamide, or -asparagine bonds. Also able to degrade protein free poly(ADP-ribose), which is synthesized in response to DNA damage: free poly(ADP-ribose) acts as a potent cell death signal and its degradation by ADPRHL2 protects cells from poly(ADP-ribose)-dependent cell death, a process named parthanatos. Also hydrolyzes free poly(ADP-ribose) in mitochondria. Specifically digests O-acetyl-ADP-D-ribose, a product of deacetylation reactions catalyzed by sirtuins. Specifically degrades 1''-O-acetyl-ADP-D-ribose isomer, rather than 2''-O-acetyl-ADP-D-ribose or 3''-O-acetyl-ADP-D-ribose isomers. The chain is ADP-ribosylhydrolase ARH3 (adprs) from Xenopus tropicalis (Western clawed frog).